The chain runs to 37 residues: Large ribosomal subunit protein bL36 (37 aa).

It belongs to the bacterial ribosomal protein bL36 family.

The polypeptide is Large ribosomal subunit protein bL36 (Alkalilimnicola ehrlichii (strain ATCC BAA-1101 / DSM 17681 / MLHE-1)).